A 159-amino-acid polypeptide reads, in one-letter code: MQKRAIYPGTFDPITNGHIDIVTRATQMFDHVILAIAASPSKKPMFTLEERVELAQQATAHLGNVEVVGFSDLMANFARNQHATVLIRGLRAVADFEYEMQLAHMNRHLMPELESVFLMPSKEWSFISSSLVKEVARHQGDVTHFLPENVHQALMAKLA.

Substrate is bound at residue T10. ATP is bound by residues T10 to F11 and H18. Positions 42, 74, and 88 each coordinate substrate. Residues G89–R91, E99, and W124–S130 each bind ATP.

Belongs to the bacterial CoaD family. As to quaternary structure, homohexamer. Mg(2+) serves as cofactor.

Its subcellular location is the cytoplasm. It carries out the reaction (R)-4'-phosphopantetheine + ATP + H(+) = 3'-dephospho-CoA + diphosphate. It participates in cofactor biosynthesis; coenzyme A biosynthesis; CoA from (R)-pantothenate: step 4/5. Reversibly transfers an adenylyl group from ATP to 4'-phosphopantetheine, yielding dephospho-CoA (dPCoA) and pyrophosphate. The protein is Phosphopantetheine adenylyltransferase of Escherichia coli (strain UTI89 / UPEC).